The following is a 490-amino-acid chain: Transcriptional regulator FleQ (490 aa).

Leu142 contacts 3',3'-c-di-GMP. ADP contacts are provided by residues Val147 and 177–182; that span reads GTGKEV. Residues 186–189 and 330–341 each bind 3',3'-c-di-GMP; these read NLHY and ELISRMEHEKRG. 2 residues coordinate ADP: Arg334 and Arg363.

As to quaternary structure, forms homodimers. Forms homohexamers that inhibit transcription initiation. Interacts with FleN; this complex is formed in the presence as well as in the absence of c-di-GMP or ATP.

Its activity is regulated as follows. C-di-GMP interaction leads to active site obstruction, hexameric ring destabilization thus relieving DNA bending and activating gene transcription. Its function is as follows. AAA+ ATPase enhancer-binding protein that acts as a transcription regulator and plays a role in the modulation of mucin adhesion and flagellar gene expression. In addition to flagella genes, also regulates expression of biofilm-related genes. Functions as a transcriptional repressor in the absence of c-di-GMP and as an activator when c-di-GMP is present. This chain is Transcriptional regulator FleQ, found in Pseudomonas aeruginosa (strain ATCC 15692 / DSM 22644 / CIP 104116 / JCM 14847 / LMG 12228 / 1C / PRS 101 / PAO1).